We begin with the raw amino-acid sequence, 333 residues long: Electron transfer flavoprotein subunit alpha, mitochondrial (333 aa).

A mitochondrion-targeting transit peptide spans 1–19 (MFRAAAPGQLRRATSLLRF). The tract at residues 20 to 204 (QSTLVIAEHA…GISEWLDQKL (185 aa)) is domain I. Lys59 carries the N6-acetyllysine; alternate modification. Lys59 bears the N6-succinyllysine; alternate mark. Lys62 is modified (N6-acetyllysine). Position 69 is an N6-acetyllysine; alternate (Lys69). Lys69 carries the N6-succinyllysine; alternate modification. An N6-acetyllysine modification is found at Lys75. Lys85 bears the N6-acetyllysine; alternate mark. Lys85 bears the N6-succinyllysine; alternate mark. Phosphothreonine is present on Thr93. N6-acetyllysine is present on residues Lys101 and Lys139. Ser140 carries the phosphoserine modification. Lys158 carries the N6-acetyllysine; alternate modification. Lys158 carries the post-translational modification N6-succinyllysine; alternate. Position 164 is an N6-acetyllysine (Lys164). Residue Lys187 is modified to N6-succinyllysine. Lys203 carries the N6-acetyllysine; alternate modification. Lys203 bears the N6-succinyllysine; alternate mark. Residues 205-333 (TKSDRPELTG…PEMTELLKKK (129 aa)) are domain II. N6-succinyllysine is present on Lys216. Arg223 lines the FAD pocket. Lys226 and Lys232 each carry N6-acetyllysine; alternate. Residues Lys226 and Lys232 each carry the N6-succinyllysine; alternate modification. Residues Ser248, 263-266 (VGQT), 281-286 (SGAIQH), and Asn300 each bind FAD. Residue Lys301 is modified to N6-succinyllysine. An FAD-binding site is contributed by 318-319 (DL).

Belongs to the ETF alpha-subunit/FixB family. As to quaternary structure, heterodimer composed of ETFA and ETFB. Identified in a complex that contains ETFA, ETFB and ETFRF1. Interaction with ETFRF1 promotes dissociation of the bound FAD and loss of electron transfer activity. Interacts with TASOR. It depends on FAD as a cofactor.

The protein resides in the mitochondrion matrix. In terms of biological role, heterodimeric electron transfer flavoprotein that accepts electrons from several mitochondrial dehydrogenases, including acyl-CoA dehydrogenases, glutaryl-CoA and sarcosine dehydrogenase. It transfers the electrons to the main mitochondrial respiratory chain via ETF-ubiquinone oxidoreductase (ETF dehydrogenase). Required for normal mitochondrial fatty acid oxidation and normal amino acid metabolism. This chain is Electron transfer flavoprotein subunit alpha, mitochondrial (ETFA), found in Bos taurus (Bovine).